The sequence spans 413 residues: MAATVSTIGAVNRTTLNNSNYGGLVPNSAFLGSRLKVSSRFTTSKMVTGNFKIVAEQDEEKQTEKDKWRGLAFDTSDDQQDITRGKGLADPLFQAPMGTGTHNAVLSSYEYISAGLRDYSYDNNVDGFYIAPAFMDKLTVHIVKNFLTLPNIKVPLILGVWGGKGQGKSFQCELVFAKMGINPIMMSAGELESGNAGEPAKLIRQRYREAADIIKKGKMCCLFINDLDAGAGRLGGTTQYTVNNQMVNATLMNIADNPTNVQLPGMYNKEENPRVPIIVTGNDFSTLYAPLIRDGRMDKFYWAPTREDRIGICTGIFRTDGVPFEDIVKLVDTFPGQSIDFFGALRARVYDDEVRKWAVGVGVERIGRNLVNSKESPPTFDQPKMTIEKLLEYGNMLVMEQENVKRVKLVTSI.

The transit peptide at 1–54 directs the protein to the chloroplast; that stretch reads MAATVSTIGAVNRTTLNNSNYGGLVPNSAFLGSRLKVSSRFTTSKMVTGNFKIV. 162–169 contributes to the ATP binding site; that stretch reads GGKGQGKS.

The protein belongs to the RuBisCO activase family.

It localises to the plastid. It is found in the chloroplast stroma. Activation of RuBisCO (ribulose-1,5-bisphosphate carboxylase/oxygenase; EC 4.1.1.39) involves the ATP-dependent carboxylation of the epsilon-amino group of lysine leading to a carbamate structure. The polypeptide is Ribulose bisphosphate carboxylase/oxygenase activase, chloroplastic (Cucumis sativus (Cucumber)).